Here is a 256-residue protein sequence, read N- to C-terminus: Geranylgeranylglyceryl phosphate synthase (256 aa).

Mg(2+) is bound by residues Asp-28 and Ser-53. Sn-glycerol 1-phosphate is bound by residues Tyr-172–Gly-178, Gly-203–Gly-204, and Gly-225–Thr-226.

It belongs to the GGGP/HepGP synthase family. Group II subfamily. The cofactor is Mg(2+).

Its subcellular location is the cytoplasm. The enzyme catalyses sn-glycerol 1-phosphate + (2E,6E,10E)-geranylgeranyl diphosphate = sn-3-O-(geranylgeranyl)glycerol 1-phosphate + diphosphate. Its pathway is membrane lipid metabolism; glycerophospholipid metabolism. Functionally, prenyltransferase that catalyzes the transfer of the geranylgeranyl moiety of geranylgeranyl diphosphate (GGPP) to the C3 hydroxyl of sn-glycerol-1-phosphate (G1P). This reaction is the first ether-bond-formation step in the biosynthesis of archaeal membrane lipids. This Methanococcus maripaludis (strain C7 / ATCC BAA-1331) protein is Geranylgeranylglyceryl phosphate synthase.